The chain runs to 554 residues: Hydroxylamine reductase (554 aa).

[2Fe-2S] cluster contacts are provided by cysteine 3, cysteine 6, cysteine 18, and cysteine 25. Positions 252, 276, 320, 408, 436, 461, 495, and 497 each coordinate hybrid [4Fe-2O-2S] cluster. At cysteine 408 the chain carries Cysteine persulfide.

It belongs to the HCP family. [2Fe-2S] cluster is required as a cofactor. Requires hybrid [4Fe-2O-2S] cluster as cofactor.

The protein localises to the cytoplasm. It catalyses the reaction A + NH4(+) + H2O = hydroxylamine + AH2 + H(+). Functionally, catalyzes the reduction of hydroxylamine to form NH(3) and H(2)O. In Shewanella putrefaciens (strain CN-32 / ATCC BAA-453), this protein is Hydroxylamine reductase.